The primary structure comprises 485 residues: Serine hydroxymethyltransferase, mitochondrial (485 aa).

K259 is modified (N6-(pyridoxal phosphate)lysine).

Belongs to the SHMT family. As to quaternary structure, homotetramer. Pyridoxal 5'-phosphate is required as a cofactor.

Its subcellular location is the mitochondrion. The enzyme catalyses (6R)-5,10-methylene-5,6,7,8-tetrahydrofolate + glycine + H2O = (6S)-5,6,7,8-tetrahydrofolate + L-serine. Its pathway is one-carbon metabolism; tetrahydrofolate interconversion. Its function is as follows. Interconversion of serine and glycine. The polypeptide is Serine hydroxymethyltransferase, mitochondrial (SHM1) (Candida glabrata (strain ATCC 2001 / BCRC 20586 / JCM 3761 / NBRC 0622 / NRRL Y-65 / CBS 138) (Yeast)).